We begin with the raw amino-acid sequence, 207 residues long: Outer-membrane lipoprotein LolB (207 aa).

Positions 1-21 are cleaved as a signal peptide; it reads MPLPDFRFIRLLPLAALVLTA. Residue Cys22 is the site of N-palmitoyl cysteine attachment. Cys22 is lipidated: S-diacylglycerol cysteine.

The protein belongs to the LolB family. As to quaternary structure, monomer.

It is found in the cell outer membrane. Functionally, plays a critical role in the incorporation of lipoproteins in the outer membrane after they are released by the LolA protein. The sequence is that of Outer-membrane lipoprotein LolB from Escherichia coli O6:K15:H31 (strain 536 / UPEC).